The sequence spans 425 residues: MIVEALNNPFDAEFNKVSSDKSISHRCAIFSLLSDKVSKISNYLEAEDTMNSLKIIEKLGAKVEFKNGVYLITPPKKIVSPNAILECGNSGTAMRIFMGLLAGCDGFFVLSGDKYLNERPMKRVASPLMQIGAKIDGRDCANKAPLAIRGGELNYFAYNSSVASAQVKTALILAGLCSAGCKFKEPELSRDHSERMLLGMGAQISQSGLEIEVKPLKGAYLKPLILDVPNDPSSCFFYAVAAAIIPGSKIIIKNILLNKTRIEAYKVLEKMGAKITYTKTSSTYEDIGDICVQYSELKSVDVNQNISWLIDEAPALAIAFACANGVSTLKNAKELRVKECDRIAITVAALKKCGIEAVELEDGFSIKGGKPNSATIDSHGDHRIAMSFAILGLKCGMNIEKSEFIATSFPKFSYFLRELGARVED.

Residues Lys21, Ser22, and Arg26 each coordinate 3-phosphoshikimate. Lys21 serves as a coordination point for phosphoenolpyruvate. Phosphoenolpyruvate is bound by residues Gly91 and Arg119. 3-phosphoshikimate contacts are provided by Ser164, Gln166, Asp311, and Lys338. Residue Gln166 participates in phosphoenolpyruvate binding. The Proton acceptor role is filled by Asp311. 2 residues coordinate phosphoenolpyruvate: Arg342 and Arg383.

The protein belongs to the EPSP synthase family. Monomer.

It is found in the cytoplasm. It carries out the reaction 3-phosphoshikimate + phosphoenolpyruvate = 5-O-(1-carboxyvinyl)-3-phosphoshikimate + phosphate. It functions in the pathway metabolic intermediate biosynthesis; chorismate biosynthesis; chorismate from D-erythrose 4-phosphate and phosphoenolpyruvate: step 6/7. In terms of biological role, catalyzes the transfer of the enolpyruvyl moiety of phosphoenolpyruvate (PEP) to the 5-hydroxyl of shikimate-3-phosphate (S3P) to produce enolpyruvyl shikimate-3-phosphate and inorganic phosphate. In Campylobacter fetus subsp. fetus (strain 82-40), this protein is 3-phosphoshikimate 1-carboxyvinyltransferase.